Consider the following 584-residue polypeptide: Protein phosphatase 2A scaffold subunit (584 aa).

14 HEAT repeats span residues 7–45 (ESDD…ALGP), 46–84 (ERTR…FVGG), 86–123 (EHAV…EIPT), 168–206 (LRKT…VKSE), 207–239 (ILPL…MLTN), 240–278 (EENI…SMGT), 279–317 (EITK…LLTK), 318–356 (EMNI…IYGK), 358–395 (DTLT…VIGI), 397–434 (MLSQ…QLGV), 441–479 (LGNL…AKNN), 480–512 (IIPK…VVGG), 513–551 (DVIS…LLDS), and 553–584 (IVQS…LQLC).

Belongs to the phosphatase 2A regulatory subunit A family. As to quaternary structure, component of the Sca1 complex composed of at least gefA, gefH, scaA, phr, and the protein phosphatase 2A subunits pppA and pho2B.

The protein resides in the cytoplasm. It is found in the cytosol. The protein localises to the cell membrane. Scaffolding molecule which may coordinate the assembly of the catalytic subunit and a variable regulatory B subunit. Component of the Sca1 complex, a regulator of cell motility, chemotaxis and signal relay. The Sca1 complex is recruited to the plasma membrane in a chemoattractant- and F-actin-dependent manner and is enriched at the leading edge of chemotaxing cells where it regulates F-actin dynamics and signal relay by controlling the activation of rasC and the downstream target of rapamycin complex 2 (TORC2)-Akt/protein kinase B (PKB) pathway. The polypeptide is Protein phosphatase 2A scaffold subunit (pppA) (Dictyostelium discoideum (Social amoeba)).